A 191-amino-acid polypeptide reads, in one-letter code: Thymidine kinase (191 aa).

ATP-binding positions include 9–16 (GSMNSGKT) and 85–88 (DESQ). Glu86 acts as the Proton acceptor in catalysis. Residues Cys143, Cys146, Cys181, and Cys184 each contribute to the Zn(2+) site.

The protein belongs to the thymidine kinase family. Homotetramer.

The protein localises to the cytoplasm. It carries out the reaction thymidine + ATP = dTMP + ADP + H(+). This is Thymidine kinase from Listeria innocua serovar 6a (strain ATCC BAA-680 / CLIP 11262).